Consider the following 108-residue polypeptide: Large ribosomal subunit protein uL11 (108 aa).

The protein belongs to the universal ribosomal protein uL11 family. In terms of assembly, part of the ribosomal stalk of the 50S ribosomal subunit. Interacts with L10 and the large rRNA to form the base of the stalk. L10 forms an elongated spine to which L12 dimers bind in a sequential fashion forming a multimeric L10(L12)X complex.

In terms of biological role, forms part of the ribosomal stalk which helps the ribosome interact with GTP-bound translation factors. The protein is Large ribosomal subunit protein uL11 (rpl11) of Aeropyrum pernix (strain ATCC 700893 / DSM 11879 / JCM 9820 / NBRC 100138 / K1).